The chain runs to 45 residues: MDYKFLAGFALGFSSAIPFSVAGLYFVYLKISSHVRSIVNEYGRG.

Residues 9 to 29 (FALGFSSAIPFSVAGLYFVYL) form a helical membrane-spanning segment.

It belongs to the polerovirus movement protein P3a family. In terms of assembly, homodimer. Heterodimer with movement protein P17.

It localises to the host cell junction. Its subcellular location is the host plasmodesma. It is found in the host Golgi apparatus. The protein resides in the host chloroplast envelope. The protein localises to the host mitochondrion outer membrane. Its function is as follows. Together with movement protein P17, plays an essential role in virus long distance movement. The sequence is that of Movement protein P3a (ORF3a) from Solanum tuberosum (Potato).